We begin with the raw amino-acid sequence, 141 residues long: Hemoglobin subunit zeta (141 aa).

Ser1 carries the post-translational modification N-acetylserine. A Globin domain is found at 1 to 141 (SLTKAERTII…VSGVLTEKYR (141 aa)). Thr28 is modified (phosphothreonine). At Ser52 the chain carries Phosphoserine. His58 contributes to the heme b binding site. Residue Ser72 is modified to Phosphoserine. A heme b-binding site is contributed by His87.

It belongs to the globin family. Heterotetramer of two zeta chains and two epsilon chains.

Functionally, the zeta chain is an alpha-type chain of mammalian embryonic hemoglobin. The sequence is that of Hemoglobin subunit zeta from Sus scrofa (Pig).